Reading from the N-terminus, the 545-residue chain is ATP synthase subunit alpha, mitochondrial (545 aa).

The N-terminal 35 residues, 1-35, are a transit peptide targeting the mitochondrion; the sequence is MLARTAAIRSLSRTLINSTKAARPAAAALASTRRL. Residues serine 57 and serine 178 each carry the phosphoserine modification. 206 to 213 lines the ATP pocket; it reads GDRQTGKT.

This sequence belongs to the ATPase alpha/beta chains family. In terms of assembly, F-type ATPases have 2 components, CF(1) - the catalytic core - and CF(0) - the membrane proton channel. CF(1) has five subunits: alpha(3), beta(3), gamma(1), delta(1), epsilon(1). CF(0) has three main subunits: a, b and c.

Its subcellular location is the mitochondrion inner membrane. Mitochondrial membrane ATP synthase (F(1)F(0) ATP synthase or Complex V) produces ATP from ADP in the presence of a proton gradient across the membrane which is generated by electron transport complexes of the respiratory chain. F-type ATPases consist of two structural domains, F(1) - containing the extramembraneous catalytic core, and F(0) - containing the membrane proton channel, linked together by a central stalk and a peripheral stalk. During catalysis, ATP synthesis in the catalytic domain of F(1) is coupled via a rotary mechanism of the central stalk subunits to proton translocation. Subunits alpha and beta form the catalytic core in F(1). Rotation of the central stalk against the surrounding alpha(3)beta(3) subunits leads to hydrolysis of ATP in three separate catalytic sites on the beta subunits. Subunit alpha does not bear the catalytic high-affinity ATP-binding sites. In Saccharomyces cerevisiae (strain ATCC 204508 / S288c) (Baker's yeast), this protein is ATP synthase subunit alpha, mitochondrial (ATP1).